Here is a 946-residue protein sequence, read N- to C-terminus: Histone-lysine N-methyltransferase, H3 lysine-79 specific (946 aa).

Over residues 1–18 (MSEADAGARDESPSRTAE) the composition is skewed to basic and acidic residues. Residues 1-28 (MSEADAGARDESPSRTAEEPAAAMRIKE) are disordered. In terms of domain architecture, DOT1 spans 54-369 (QGKTLRLPGN…KLIKYYEDQR (316 aa)). Residues 173 to 176 (YGET), 196 to 205 (FVDLGSGIGQ), glutamate 223, and 259 to 260 (DF) each bind S-adenosyl-L-methionine. Over residues 368–409 (QRRRQEVKSSREGSEISDGRDMGLKKRKSQRESSVHPDKLQK) the composition is skewed to basic and acidic residues. Disordered stretches follow at residues 368 to 577 (QRRR…HGGG) and 849 to 905 (PTAS…GATE). Polar residues predominate over residues 410 to 422 (TEQAAASSHQSPK). Positions 464–484 (GKDREKEKEKKKNKIYEEKKV) are enriched in basic and acidic residues. Composition is skewed to low complexity over residues 491 to 502 (KSSSSRYSSETP), 512 to 528 (NSIS…QPKA), and 855 to 864 (SKVSPSSSSS). Residues 880–903 (GAGGGGKRGTSGGRKSDGGGGGGA) are compositionally biased toward gly residues.

The protein belongs to the class I-like SAM-binding methyltransferase superfamily. DOT1 family. As to quaternary structure, interacts with zfp-1 (via C-terminus) to form a heterodimer known as the zfp-1-dot-1.1 complex or DotCom complex.

Its subcellular location is the nucleus. The protein localises to the chromosome. The enzyme catalyses L-lysyl(79)-[histone H3] + 3 S-adenosyl-L-methionine = N(6),N(6),N(6)-trimethyl-L-lysyl(79)-[histone H3] + 3 S-adenosyl-L-homocysteine + 3 H(+). In terms of biological role, histone methyltransferase, which in complex with zfp-1, methylates 'Lys-79' of histone H3 to activate transcription. During stress, the zfp-1-dot-1.1 complex also plays a role in the deubiquitination of histone H2B sites, which negatively modulates the RNA polymerase II-induced transcription of highly expressed genes. Involved in controlling tissue-specific gene expression, particularly in the epidermis. The polypeptide is Histone-lysine N-methyltransferase, H3 lysine-79 specific (Caenorhabditis elegans).